The following is a 74-amino-acid chain: Cytochrome c oxidase subunit 2 (74 aa).

At Met-1 to Ser-14 the chain is on the mitochondrial intermembrane side. A helical transmembrane segment spans residues Pro-15–Met-45. Over Val-46–Ile-74 the chain is Mitochondrial matrix.

Belongs to the cytochrome c oxidase subunit 2 family. In terms of assembly, component of the cytochrome c oxidase (complex IV, CIV), a multisubunit enzyme composed of 14 subunits. The complex is composed of a catalytic core of 3 subunits MT-CO1, MT-CO2 and MT-CO3, encoded in the mitochondrial DNA, and 11 supernumerary subunits COX4I, COX5A, COX5B, COX6A, COX6B, COX6C, COX7A, COX7B, COX7C, COX8 and NDUFA4, which are encoded in the nuclear genome. The complex exists as a monomer or a dimer and forms supercomplexes (SCs) in the inner mitochondrial membrane with NADH-ubiquinone oxidoreductase (complex I, CI) and ubiquinol-cytochrome c oxidoreductase (cytochrome b-c1 complex, complex III, CIII), resulting in different assemblies (supercomplex SCI(1)III(2)IV(1) and megacomplex MCI(2)III(2)IV(2)). Found in a complex with TMEM177, COA6, COX18, COX20, SCO1 and SCO2. Interacts with TMEM177 in a COX20-dependent manner. Interacts with COX20. Interacts with COX16. Requires Cu cation as cofactor.

The protein resides in the mitochondrion inner membrane. It carries out the reaction 4 Fe(II)-[cytochrome c] + O2 + 8 H(+)(in) = 4 Fe(III)-[cytochrome c] + 2 H2O + 4 H(+)(out). Its function is as follows. Component of the cytochrome c oxidase, the last enzyme in the mitochondrial electron transport chain which drives oxidative phosphorylation. The respiratory chain contains 3 multisubunit complexes succinate dehydrogenase (complex II, CII), ubiquinol-cytochrome c oxidoreductase (cytochrome b-c1 complex, complex III, CIII) and cytochrome c oxidase (complex IV, CIV), that cooperate to transfer electrons derived from NADH and succinate to molecular oxygen, creating an electrochemical gradient over the inner membrane that drives transmembrane transport and the ATP synthase. Cytochrome c oxidase is the component of the respiratory chain that catalyzes the reduction of oxygen to water. Electrons originating from reduced cytochrome c in the intermembrane space (IMS) are transferred via the dinuclear copper A center (CU(A)) of subunit 2 and heme A of subunit 1 to the active site in subunit 1, a binuclear center (BNC) formed by heme A3 and copper B (CU(B)). The BNC reduces molecular oxygen to 2 water molecules using 4 electrons from cytochrome c in the IMS and 4 protons from the mitochondrial matrix. The sequence is that of Cytochrome c oxidase subunit 2 (mt-co2) from Megalops atlanticus (Tarpon).